We begin with the raw amino-acid sequence, 213 residues long: 3-demethoxyubiquinol 3-hydroxylase (213 aa).

Positions 62, 92, 95, 144, 176, and 179 each coordinate Fe cation.

Belongs to the COQ7 family. Fe cation serves as cofactor.

The protein localises to the cell membrane. The enzyme catalyses a 5-methoxy-2-methyl-3-(all-trans-polyprenyl)benzene-1,4-diol + AH2 + O2 = a 3-demethylubiquinol + A + H2O. The protein operates within cofactor biosynthesis; ubiquinone biosynthesis. Its function is as follows. Catalyzes the hydroxylation of 2-nonaprenyl-3-methyl-6-methoxy-1,4-benzoquinol during ubiquinone biosynthesis. In Legionella pneumophila (strain Corby), this protein is 3-demethoxyubiquinol 3-hydroxylase.